A 424-amino-acid chain; its full sequence is 2,3-bisphosphoglycerate-independent phosphoglycerate mutase (424 aa).

Belongs to the BPG-independent phosphoglycerate mutase family. A-PGAM subfamily.

It carries out the reaction (2R)-2-phosphoglycerate = (2R)-3-phosphoglycerate. The protein operates within carbohydrate degradation; glycolysis; pyruvate from D-glyceraldehyde 3-phosphate: step 3/5. In terms of biological role, catalyzes the interconversion of 2-phosphoglycerate and 3-phosphoglycerate. The protein is 2,3-bisphosphoglycerate-independent phosphoglycerate mutase of Aeropyrum pernix (strain ATCC 700893 / DSM 11879 / JCM 9820 / NBRC 100138 / K1).